The primary structure comprises 231 residues: Monothiol glutaredoxin-6 (231 aa).

The N-terminal stretch at 1–29 (MIPSNKRNARILSITTLLLLLVFFVAQNA) is a signal peptide. A Glutaredoxin domain is found at 116–219 (QKEYSLILDL…ESLQVWSDGK (104 aa)). A [2Fe-2S] cluster-binding site is contributed by cysteine 136.

Belongs to the glutaredoxin family. Monothiol subfamily.

Its subcellular location is the vacuole. The sequence is that of Monothiol glutaredoxin-6 (GRX6) from Saccharomyces cerevisiae (strain ATCC 204508 / S288c) (Baker's yeast).